Consider the following 464-residue polypeptide: tRNA(Ile)-lysidine synthase (464 aa).

ATP is bound at residue 30–35 (SGGVDS).

This sequence belongs to the tRNA(Ile)-lysidine synthase family.

It is found in the cytoplasm. It catalyses the reaction cytidine(34) in tRNA(Ile2) + L-lysine + ATP = lysidine(34) in tRNA(Ile2) + AMP + diphosphate + H(+). Functionally, ligates lysine onto the cytidine present at position 34 of the AUA codon-specific tRNA(Ile) that contains the anticodon CAU, in an ATP-dependent manner. Cytidine is converted to lysidine, thus changing the amino acid specificity of the tRNA from methionine to isoleucine. In Shewanella oneidensis (strain ATCC 700550 / JCM 31522 / CIP 106686 / LMG 19005 / NCIMB 14063 / MR-1), this protein is tRNA(Ile)-lysidine synthase.